Reading from the N-terminus, the 99-residue chain is Protein Frey (99 aa).

Residues 10–29 (YPRAGLSLFLFYLILAGALL) traverse the membrane as a helical segment. Positions 60 to 90 (DYGLRPKHPRPGGPRPLLSQAQQRKRDGPNM) are disordered.

In terms of assembly, interacts with SPPL2C (via active sites); the interaction stabilizes FREY1 protein and inhibits SPPL2C proteolytic activity. Interacts with IZUMO1; the interaction retains IZUMO1 at the endoplasmic reticulum membrane and coordinates IZUMO1 complex assembly. In terms of tissue distribution, expressed in round spermatids (at protein level).

It is found in the endoplasmic reticulum membrane. Key regulator for male fertility expressed transiently in round spermatids where it recruits IZUMO1 at the endoplasmic reticulum (ER) membrane and coordinates the oolemmal binding multimeric complex (IZUMO1 complex) assembly. Upon complete assembly of the IZUMO1 complex, its ER retention is released, facilitating IZUMO1 complex export to the acrosome. Through the interaction with SPPL2C, inhibits its intramembrane protease activity directly accessing the catalytic center of an I-CLiP. The sequence is that of Protein Frey from Mus musculus (Mouse).